A 240-amino-acid polypeptide reads, in one-letter code: uncharacterized protein (240 aa).

It to H.influenzae HI_0575.

This is an uncharacterized protein from Escherichia coli (strain K12).